The chain runs to 139 residues: Nucleoside diphosphate kinase (139 aa).

ATP-binding residues include lysine 10, phenylalanine 58, arginine 86, threonine 92, arginine 104, and asparagine 114. Histidine 117 (pros-phosphohistidine intermediate) is an active-site residue.

The protein belongs to the NDK family. In terms of assembly, homotetramer. The cofactor is Mg(2+).

The protein resides in the cytoplasm. The enzyme catalyses a 2'-deoxyribonucleoside 5'-diphosphate + ATP = a 2'-deoxyribonucleoside 5'-triphosphate + ADP. It catalyses the reaction a ribonucleoside 5'-diphosphate + ATP = a ribonucleoside 5'-triphosphate + ADP. In terms of biological role, major role in the synthesis of nucleoside triphosphates other than ATP. The ATP gamma phosphate is transferred to the NDP beta phosphate via a ping-pong mechanism, using a phosphorylated active-site intermediate. In Nocardia farcinica (strain IFM 10152), this protein is Nucleoside diphosphate kinase.